We begin with the raw amino-acid sequence, 1039 residues long: uncharacterized protein (1039 aa).

Residues 1 to 28 (MKLFPRTLLKILVVSFILNFGVTSKSYA) form the signal peptide. 6 helical membrane passes run 326–346 (IVTAFLTLYVMLFGAKILLAG), 354–374 (YINFILKIIFVTYFSIGLNIT), 387–407 (MIQWAFPFLLNGINGLASWVM), 491–511 (MLVSLALAYPLLVISVAAFMV), 517–537 (CMVSIVILGILAPLFVPMFLF), and 551–571 (MISFLLQPMVVVTFMITMFSV). A disordered region spans residues 654 to 680 (KPNQTCDPKAADADTKCNPKPGDSSTS). Residues 710–730 (IKDILLALVTACFTLYLMYNF) form a helical membrane-spanning segment. Disordered stretches follow at residues 799-875 (LVKG…PTTV), 917-949 (IKEAVPESQKEEPKEPRVKHTTEVEPELNLDEN), and 1004-1039 (LYRSVGGRAKDKATERNDGTIENRSKKIDSGSDENP). Residues 802-811 (GSGGGGGSEG) are compositionally biased toward gly residues. The segment covering 812-836 (GDSFTSGGLRETSSTAATPSSALSS) has biased composition (low complexity). The segment covering 843–861 (GTATPSSASEEMLDTSFSN) has biased composition (polar residues). Basic and acidic residues-rich tracts occupy residues 917–939 (IKEAVPESQKEEPKEPRVKHTTE) and 1004–1033 (LYRSVGGRAKDKATERNDGTIENRSKKIDS).

This sequence belongs to the TrbL/VirB6 family.

It localises to the cell membrane. This is an uncharacterized protein from Rickettsia bellii (strain RML369-C).